The following is a 183-amino-acid chain: Small ribosomal subunit protein cS23y (183 aa).

This sequence belongs to the chloroplast-specific ribosomal protein cS23 family. Part of the 30S ribosomal subunit.

It localises to the plastid. It is found in the chloroplast. Functionally, component of the chloroplast ribosome (chloro-ribosome), a dedicated translation machinery responsible for the synthesis of chloroplast genome-encoded proteins, including proteins of the transcription and translation machinery and components of the photosynthetic apparatus. In Arabidopsis thaliana (Mouse-ear cress), this protein is Small ribosomal subunit protein cS23y.